The sequence spans 212 residues: 2',3'-cyclic-nucleotide 3'-phosphodiesterase (212 aa).

Histidine 51 serves as the catalytic Proton donor/acceptor. Threonine 53 provides a ligand contact to substrate. Histidine 146 acts as the Proton donor/acceptor in catalysis. Residues serine 148 and tyrosine 151 each contribute to the substrate site.

Belongs to the 2H phosphoesterase superfamily. CPD1 family.

It localises to the golgi apparatus. It catalyses the reaction a nucleoside 2',3'-cyclic phosphate + H2O = a nucleoside 2'-phosphate + H(+). Involved in the metabolism of ADP-ribose 1',2'-cyclic phosphate which is produced as a consequence of tRNA splicing. This chain is 2',3'-cyclic-nucleotide 3'-phosphodiesterase (cpd-7), found in Neurospora crassa (strain ATCC 24698 / 74-OR23-1A / CBS 708.71 / DSM 1257 / FGSC 987).